We begin with the raw amino-acid sequence, 234 residues long: bZIP transcription factor 27 (234 aa).

The Nuclear localization signal motif lies at 152-159 (KKRGQDSD). Residues 163-213 (GDRRYKRMIKNRESAARSRARKQAYTNELELEIAHLQTENARLKIQQEQLK) enclose the bZIP domain. The segment at 165-184 (RRYKRMIKNRESAARSRARK) is basic motif. The segment at 191-212 (LELEIAHLQTENARLKIQQEQL) is leucine-zipper. Phosphothreonine is present on Thr231.

This sequence belongs to the bZIP family. In terms of assembly, self-interacts. Interacts with FT and FD/BZIP14. Interacts with CPK33. Post-translationally, phosphorylated. As to expression, expressed on the flanks of the shoot apex.

It localises to the nucleus. Its function is as follows. Transcription factor required for the transition to flowering promoted by FT. The protein is bZIP transcription factor 27 of Arabidopsis thaliana (Mouse-ear cress).